A 218-amino-acid polypeptide reads, in one-letter code: Keratin-associated protein 10-8 (218 aa).

The 16 X 5 AA repeats of C-C-X(3) stretch occupies residues 26–202 (CGNQVSSPSA…FCQPSCCHPA (177 aa)). 16 repeat units span residues 50–54 (CCEPT), 55–59 (CCAPS), 60–64 (CCAPA), 86–90 (CSSSS), 96–100 (CCVPV), 101–105 (CCRPV), 111–115 (CCRPV), 121–125 (CCTPV), 131–135 (CCRPV), 136–140 (CCRPV), 141–145 (CCRPV), 151–155 (CCRPM), 161–167 (PCSAPSS), 168–172 (CCRPS), 187–191 (CCVPT), and 198–202 (CCHPA).

The protein belongs to the KRTAP type 10 family. Interacts with hair keratins.

Functionally, in the hair cortex, hair keratin intermediate filaments are embedded in an interfilamentous matrix, consisting of hair keratin-associated proteins (KRTAP), which are essential for the formation of a rigid and resistant hair shaft through their extensive disulfide bond cross-linking with abundant cysteine residues of hair keratins. The matrix proteins include the high-sulfur and high-glycine-tyrosine keratins. The protein is Keratin-associated protein 10-8 of Bos taurus (Bovine).